A 475-amino-acid polypeptide reads, in one-letter code: F-box protein At3g59150 (475 aa).

One can recognise an F-box domain in the interval 12–58 (GDVISNLPNDLLCRILSYLSTKEAALTSILSKRWSNLLLSIPILDFD).

This Arabidopsis thaliana (Mouse-ear cress) protein is F-box protein At3g59150.